A 165-amino-acid polypeptide reads, in one-letter code: Cytochrome c-type biogenesis protein CcmE (165 aa).

At M1–R7 the chain is on the cytoplasmic side. A helical; Signal-anchor for type II membrane protein transmembrane segment spans residues L8–A28. Topologically, residues M29 to R165 are periplasmic. H122 and Y126 together coordinate heme. Residues Q138–P149 are compositionally biased toward basic and acidic residues. The disordered stretch occupies residues Q138–R165. A compositionally biased stretch (low complexity) spans G153 to R165.

Belongs to the CcmE/CycJ family.

It localises to the cell inner membrane. Its function is as follows. Heme chaperone required for the biogenesis of c-type cytochromes. Transiently binds heme delivered by CcmC and transfers the heme to apo-cytochromes in a process facilitated by CcmF and CcmH. This Rhodopseudomonas palustris (strain HaA2) protein is Cytochrome c-type biogenesis protein CcmE.